The following is a 599-amino-acid chain: MNGAEAMIKALEAEKVEILFGYPGGALLPFYDALHHSDLIHLLTRHEQAAAHAADGYARASGKVGVCIGTSGPGATNLVTGVATAHSDSSPMVALTGQVPTKLIGNDAFQEIDALGLFMPIVKHNFQIQKTCQIPEIFRSAFEIAQTGRPGPVHIDLPKDVQELELDIDKHPIPSKVKLIGYNPTTIGHPRQIKKAIKLIASAKRPIILAGGGVLLSGANEELLKLVELLNIPVCTTLMGKGCISENHPLALGMVGMHGTKPANYCLSESDVLISIGCRFSDRITGDIKSFATNAKIIHIDIDPAEIGKNVNVDVPIVGDAKLILKEVIKQLDYIINKDSKENNDKENISQWIENVNSLKKSSIPVMDYDDIPIKPQKIVKELMAVIDDLNINKNTIITTDVGQNQMWMAHYFKTQTPRSFLSSGGLGTMGFGFPSAIGAKVAKPDSKVICITGDGGFMMNCQELGTIAEYNIPVVICIFDNRTLGMVYQWQNLFYGKRQCSVNFGGAPDFIKLAESYGIKARRIESPNEINEALKEAINCDEPYLLDFAIDPSSALSMVPPGAKLTNIIDAVQEHPNEKIVCFDEIKRRYMENKRNRK.

Residue glutamate 47 participates in thiamine diphosphate binding. Residues arginine 149, 258 to 279 (HGTK…IGCR), and 301 to 320 (DIDP…IVGD) contribute to the FAD site. The tract at residues 404–484 (QNQMWMAHYF…VVICIFDNRT (81 aa)) is thiamine pyrophosphate binding. Mg(2+) contacts are provided by aspartate 455 and asparagine 482.

Belongs to the TPP enzyme family. Dimer of large and small chains. Requires Mg(2+) as cofactor. It depends on thiamine diphosphate as a cofactor.

The enzyme catalyses 2 pyruvate + H(+) = (2S)-2-acetolactate + CO2. It functions in the pathway amino-acid biosynthesis; L-isoleucine biosynthesis; L-isoleucine from 2-oxobutanoate: step 1/4. The protein operates within amino-acid biosynthesis; L-valine biosynthesis; L-valine from pyruvate: step 1/4. This chain is Probable acetolactate synthase large subunit (ilvB), found in Methanococcus aeolicus.